A 561-amino-acid polypeptide reads, in one-letter code: Developmental and secondary metabolism regulator veA (561 aa).

3 disordered regions span residues 1–23 (MANRPSLMPPHNETEHSVSRITR), 41–60 (ARACGAGAKSSADRRPVDPP), and 258–361 (AYAR…PQGI). Residues 12-23 (NETEHSVSRITR) are compositionally biased toward basic and acidic residues. The Velvet domain maps to 25-233 (GKQLTYKLSV…AEQGCRVRIR (209 aa)). The short motif at 39 to 44 (ERARAC) is the Nuclear localization signal element. Positions 258-268 (AYARSSDRFTT) are enriched in basic and acidic residues. The span at 324 to 339 (SHSQTPSYQSHLSFGS) shows a compositional bias: polar residues. Over residues 347 to 357 (PHMPPTPPPVA) the composition is skewed to pro residues. Residues 438–485 (RPQTPNLPAMPPPKPLSNDYANHVVPSVECTSPGGSGGGGYDNVRGKR) are PEST. The disordered stretch occupies residues 491–524 (GPTYGKRSHEDTFGLDDRSMQNGMRPDTEPYPAY). Basic and acidic residues predominate over residues 497 to 509 (RSHEDTFGLDDRS).

It belongs to the velvet family. VeA subfamily. In terms of assembly, component of the heterotrimeric velvet complex composed of laeA, veA and velB; velA acting as a bridging protein between laeA and velB. Interacts with kapA. Interacts with vosA and velc.

The protein localises to the nucleus. It localises to the cytoplasm. Its function is as follows. Component of the velvet transcription factor complex that controls sexual/asexual developmental ratio in response to light, promoting sexual development in the darkness while stimulating asexual sporulation under illumination. The velvet complex acts as a global regulator for secondary metabolite gene expression. Controls the expression of the penicillin gene cluster. Positively controls the expression of the class V chitinase chiB1. Positively controls the expression of the transcription factor atfA. Required for cell wall integrity and controls hyphal branching. In Penicillium rubens (strain ATCC 28089 / DSM 1075 / NRRL 1951 / Wisconsin 54-1255) (Penicillium chrysogenum), this protein is Developmental and secondary metabolism regulator veA.